Reading from the N-terminus, the 66-residue chain is Hirudin-PA (66 aa).

The segment at 1 to 3 (ITY) is interaction with thrombin active site. 3 disulfide bridges follow: C6–C14, C16–C28, and C22–C39. Residues 39-66 (CVTGEGTPKPQSHNQGDFEPIPEDAYDE) are disordered. An O-linked (GalNAc...) threonine glycan is attached at T45. The tract at residues 55-66 (DFEPIPEDAYDE) is interaction with fibrinogen-binding exosite of thrombin. Residue Y64 is modified to Sulfotyrosine.

This sequence belongs to the protease inhibitor I14 (hirudin) family.

It is found in the secreted. Its function is as follows. Hirudin is a potent thrombin-specific protease inhibitor. It forms a stable non-covalent complex with alpha-thrombin, thereby abolishing its ability to cleave fibrinogen. This is Hirudin-PA from Hirudo medicinalis (Medicinal leech).